Reading from the N-terminus, the 181-residue chain is MSRIGNKPVAIPSGVTVSIADRNIDVEGPKGKLSFKHRPEVKVAVDSDTNQVIVSRDGDDRPSREFHGLTRAIVANMLVGVKDGYEKKLEIVGVGYLASISGDTLQLRVGYANELHRKIPTDLTVTCPDQTHVVIQGCDKQSVGQFAAEIRSLRKPEPYKGKGIRYQGEQVKIKPGKSATK.

It belongs to the universal ribosomal protein uL6 family. Part of the 50S ribosomal subunit.

Functionally, this protein binds to the 23S rRNA, and is important in its secondary structure. It is located near the subunit interface in the base of the L7/L12 stalk, and near the tRNA binding site of the peptidyltransferase center. This is Large ribosomal subunit protein uL6 from Rhodopirellula baltica (strain DSM 10527 / NCIMB 13988 / SH1).